Consider the following 396-residue polypeptide: Acetate kinase (396 aa).

Position 8 (asparagine 8) interacts with Mg(2+). Residue lysine 15 coordinates ATP. A substrate-binding site is contributed by arginine 89. The Proton donor/acceptor role is filled by aspartate 146. ATP-binding positions include 206–210, 283–285, and 331–335; these read HIGNG, DMR, and GVGEN. Glutamate 383 provides a ligand contact to Mg(2+).

It belongs to the acetokinase family. Homodimer. Mg(2+) serves as cofactor. The cofactor is Mn(2+).

The protein resides in the cytoplasm. The catalysed reaction is acetate + ATP = acetyl phosphate + ADP. It participates in metabolic intermediate biosynthesis; acetyl-CoA biosynthesis; acetyl-CoA from acetate: step 1/2. Its function is as follows. Catalyzes the formation of acetyl phosphate from acetate and ATP. Can also catalyze the reverse reaction. This Streptococcus pneumoniae (strain Hungary19A-6) protein is Acetate kinase.